The following is a 282-amino-acid chain: Malonyl-[acyl-carrier protein] O-methyltransferase 1 (282 aa).

It belongs to the methyltransferase superfamily.

The enzyme catalyses malonyl-[ACP] + S-adenosyl-L-methionine = malonyl-[ACP] methyl ester + S-adenosyl-L-homocysteine. Its pathway is cofactor biosynthesis; biotin biosynthesis. Functionally, converts the free carboxyl group of a malonyl-thioester to its methyl ester by transfer of a methyl group from S-adenosyl-L-methionine (SAM). It allows to synthesize pimeloyl-ACP via the fatty acid synthetic pathway. This Coxiella burnetii (strain RSA 493 / Nine Mile phase I) protein is Malonyl-[acyl-carrier protein] O-methyltransferase 1.